A 94-amino-acid chain; its full sequence is Small ribosomal subunit protein uS19 (94 aa).

Belongs to the universal ribosomal protein uS19 family.

Its function is as follows. Protein S19 forms a complex with S13 that binds strongly to the 16S ribosomal RNA. This is Small ribosomal subunit protein uS19 from Syntrophomonas wolfei subsp. wolfei (strain DSM 2245B / Goettingen).